We begin with the raw amino-acid sequence, 204 residues long: Large ribosomal subunit protein uL4 (204 aa).

Residues 44-76 (KRQGTQSAKTRSEVRGGGIKPWRQKGTGRARQG) form a disordered region.

It belongs to the universal ribosomal protein uL4 family. Part of the 50S ribosomal subunit.

In terms of biological role, one of the primary rRNA binding proteins, this protein initially binds near the 5'-end of the 23S rRNA. It is important during the early stages of 50S assembly. It makes multiple contacts with different domains of the 23S rRNA in the assembled 50S subunit and ribosome. Its function is as follows. Forms part of the polypeptide exit tunnel. This Clostridium perfringens (strain 13 / Type A) protein is Large ribosomal subunit protein uL4.